A 382-amino-acid chain; its full sequence is Kelch domain-containing protein 3 (382 aa).

Kelch repeat units follow at residues 25 to 77 (RVYS…PYMR), 88 to 138 (TVLL…VLGK), 139 to 189 (IMYI…TMLG), 191 to 249 (HMYV…GYNG), and 251 to 301 (LYIF…IVGD).

In terms of assembly, component of a CRL2(KLHDC3) complex, also named ECS(KLHDC3) complex, composed of CUL2, Elongin BC (ELOB and ELOC), RBX1 and substrate-specific adapter KLHDC3. May form oligomers as a KLHDC3-ELOB-ELOC complex; this interaction is likely autoinhibitory for the E3 ligase complex.

It localises to the cytoplasm. It functions in the pathway protein modification; protein ubiquitination. Its function is as follows. Substrate-recognition component of a Cul2-RING (CRL2) E3 ubiquitin-protein ligase complex of the DesCEND (destruction via C-end degrons) pathway, which recognizes a C-degron located at the extreme C terminus of target proteins, leading to their ubiquitination and degradation. The C-degron recognized by the DesCEND pathway is usually a motif of less than ten residues and can be present in full-length proteins, truncated proteins or proteolytically cleaved forms. The CRL2(KLHDC3) complex specifically recognizes proteins with a glycine (Gly) at the C-terminus, leading to their ubiquitination and degradation: recognizes the C-terminal -Arg-(Xaa)n-Arg-Gly, -Arg-(Xaa)n-Lys-Gly, and -Arg-(Xaa)n-Gln-Gly degrons. The CRL2(KLHDC3) complex mediates ubiquitination and degradation of truncated SELENOV and SEPHS2 selenoproteins produced by failed UGA/Sec decoding, which end with a glycine. May be involved in meiotic recombination process. The sequence is that of Kelch domain-containing protein 3 from Homo sapiens (Human).